Here is a 93-residue protein sequence, read N- to C-terminus: Large ribosomal subunit protein bL31B (93 aa).

It belongs to the bacterial ribosomal protein bL31 family. Type B subfamily. As to quaternary structure, part of the 50S ribosomal subunit.

This chain is Large ribosomal subunit protein bL31B, found in Psychrobacter cryohalolentis (strain ATCC BAA-1226 / DSM 17306 / VKM B-2378 / K5).